The sequence spans 390 residues: Chorismate synthase (390 aa).

Positions 39 and 45 each coordinate NADP(+). Residues 132–134 (RSS), 253–254 (NA), Gly-298, 313–317 (KPIPT), and Arg-339 contribute to the FMN site.

It belongs to the chorismate synthase family. In terms of assembly, homotetramer. FMNH2 is required as a cofactor.

It carries out the reaction 5-O-(1-carboxyvinyl)-3-phosphoshikimate = chorismate + phosphate. It participates in metabolic intermediate biosynthesis; chorismate biosynthesis; chorismate from D-erythrose 4-phosphate and phosphoenolpyruvate: step 7/7. Functionally, catalyzes the anti-1,4-elimination of the C-3 phosphate and the C-6 proR hydrogen from 5-enolpyruvylshikimate-3-phosphate (EPSP) to yield chorismate, which is the branch point compound that serves as the starting substrate for the three terminal pathways of aromatic amino acid biosynthesis. This reaction introduces a second double bond into the aromatic ring system. The polypeptide is Chorismate synthase (Bacillus subtilis (strain 168)).